Here is a 130-residue protein sequence, read N- to C-terminus: MYSFEQAITQLFQQLSLSIPDTIEPVIGVKVGEFACHITEHPVGQILMFTLPSLDNNDEKETLLSHNIFSQDILKPILSWDEVGGHPVLWNRQPLNSLDNNSLYTQLEMLVQGAERLQTSSLISPPRSFS.

Positive regulator of YopE. In Yersinia pestis, this protein is YopE regulator (yerA).